The following is a 550-amino-acid chain: U-box domain-containing protein 40 (550 aa).

A compositionally biased stretch (basic and acidic residues) spans 19–29 (KSDNLSRRESL). Residues 19-55 (KSDNLSRRESLAGKSKWRTSLSRSSSSSSSNNNSPTK) form a disordered region. Residues 38 to 52 (SLSRSSSSSSSNNNS) are compositionally biased toward low complexity. A U-box domain is found at 57-127 (EIPAEFLCPI…HSWCERRCFP (71 aa)). ARM repeat units lie at residues 260–299 (ESSRISLCTTRVISALKSLIVSRYATVQVNVTAVLVNLSL), 301–340 (KSNKVKIVRSGIVPPLIDVLKCGSVEAQEHSAGVIFSLAL), 342–381 (DENKTAIGVLGGLEPLLHLIRVGTELTRHDSALALYHLSL), 383–420 (QSNRGKLVKLGAVQMLLGMVSLGQMIGRVLLILCNMAS), and 422–464 (PVSR…GLSH).

The catalysed reaction is S-ubiquitinyl-[E2 ubiquitin-conjugating enzyme]-L-cysteine + [acceptor protein]-L-lysine = [E2 ubiquitin-conjugating enzyme]-L-cysteine + N(6)-ubiquitinyl-[acceptor protein]-L-lysine.. It participates in protein modification; protein ubiquitination. In terms of biological role, functions as an E3 ubiquitin ligase. The polypeptide is U-box domain-containing protein 40 (PUB40) (Arabidopsis thaliana (Mouse-ear cress)).